The chain runs to 392 residues: GTPase Obg (392 aa).

Residues 1-159 form the Obg domain; that stretch reads MKFVDEATIK…RELRLELLLL (159 aa). Residues 160–333 enclose the OBG-type G domain; sequence ADVGMLGLPN…VCNELSDFMD (174 aa). GTP is bound by residues 166–173, 191–195, 213–216, 283–286, and 314–316; these read GLPNAGKS, FTTLI, DIPG, NKTD, and AAV. 2 residues coordinate Mg(2+): Ser173 and Thr193. The interval 364 to 392 is disordered; sequence GKNVVTEDGDDDDDWDDEEDDGHVIYARD. A compositionally biased stretch (acidic residues) spans 370–384; it reads EDGDDDDDWDDEEDD.

Belongs to the TRAFAC class OBG-HflX-like GTPase superfamily. OBG GTPase family. As to quaternary structure, monomer. Requires Mg(2+) as cofactor.

The protein resides in the cytoplasm. An essential GTPase which binds GTP, GDP and possibly (p)ppGpp with moderate affinity, with high nucleotide exchange rates and a fairly low GTP hydrolysis rate. Plays a role in control of the cell cycle, stress response, ribosome biogenesis and in those bacteria that undergo differentiation, in morphogenesis control. The protein is GTPase Obg of Aliivibrio salmonicida (strain LFI1238) (Vibrio salmonicida (strain LFI1238)).